The primary structure comprises 551 residues: (6-4)DNA photolyase (551 aa).

The Photolyase/cryptochrome alpha/beta domain occupies 13-157; it reads AAAMVWFRKG…DVFSPVSHTL (145 aa). Glu254 lines the phosphate pocket. FAD is bound by residues Lys255, 268–272, 309–313, 372–375, Arg378, 407–409, and Asn413; these read TTVLS, QLLWR, WMHH, and DSD. A DNA-binding site is contributed by Trp312. The interval 374 to 379 is interaction with DNA; sequence HHLARH. Residue Trp419 participates in DNA binding. The disordered stretch occupies residues 508 to 551; the sequence is YASNRLDDDKPDKGKSSNSSRRKLSAGSQVTPNSSKTKQLKRSS. The span at 512 to 522 shows a compositional bias: basic and acidic residues; it reads RLDDDKPDKGK. Over residues 533 to 544 the composition is skewed to polar residues; it reads AGSQVTPNSSKT.

Belongs to the DNA photolyase class-1 family. It depends on FAD as a cofactor.

It catalyses the reaction (6-4) photoproduct (in DNA) = 2 pyrimidine residues (in DNA).. Functionally, involved in repair of UV radiation-induced DNA damage. Catalyzes the photoreactivation of pyrimidine [6-4] pyrimidone photoproduct (6-4 products). The chain is (6-4)DNA photolyase (UVR3) from Oryza sativa subsp. japonica (Rice).